The primary structure comprises 702 residues: Elongation factor G 2 (702 aa).

The 283-residue stretch at 8–290 folds into the tr-type G domain; that stretch reads ERYRNIGISA…AVIDYLPSPV (283 aa). Residues 17–24, 88–92, and 142–145 each bind GTP; these read AHIDAGKT, DTPGH, and NKMD.

Belongs to the TRAFAC class translation factor GTPase superfamily. Classic translation factor GTPase family. EF-G/EF-2 subfamily.

It localises to the cytoplasm. Functionally, catalyzes the GTP-dependent ribosomal translocation step during translation elongation. During this step, the ribosome changes from the pre-translocational (PRE) to the post-translocational (POST) state as the newly formed A-site-bound peptidyl-tRNA and P-site-bound deacylated tRNA move to the P and E sites, respectively. Catalyzes the coordinated movement of the two tRNA molecules, the mRNA and conformational changes in the ribosome. The protein is Elongation factor G 2 of Cupriavidus metallidurans (strain ATCC 43123 / DSM 2839 / NBRC 102507 / CH34) (Ralstonia metallidurans).